The following is a 158-amino-acid chain: Fluoride-specific ion channel FluC 2 (158 aa).

4 helical membrane passes run 25 to 45 (AWHG…IGGT), 63 to 83 (WTTF…MVVI), 95 to 115 (PFFG…AVDI), and 126 to 146 (TALA…RLAA). Residues glycine 103 and threonine 106 each coordinate Na(+).

It belongs to the fluoride channel Fluc/FEX (TC 1.A.43) family.

The protein resides in the cell membrane. It catalyses the reaction fluoride(in) = fluoride(out). With respect to regulation, na(+) is not transported, but it plays an essential structural role and its presence is essential for fluoride channel function. Its function is as follows. Fluoride-specific ion channel. Important for reducing fluoride concentration in the cell, thus reducing its toxicity. This is Fluoride-specific ion channel FluC 2 from Streptomyces avermitilis (strain ATCC 31267 / DSM 46492 / JCM 5070 / NBRC 14893 / NCIMB 12804 / NRRL 8165 / MA-4680).